A 661-amino-acid polypeptide reads, in one-letter code: 72 kDa type IV collagenase (661 aa).

An N-terminal signal peptide occupies residues 1 to 30 (MTEARVSRGALAALLRALCALGCLLGRAAA). Positions 31–110 (APSPIIKFPG…PRCGNPDVAN (80 aa)) are cleaved as a propeptide — activation peptide. Positions 101 to 108 (PRCGNPDV) match the Cysteine switch motif. Position 103 (Cys103) interacts with Zn(2+). The collagenase-like 1 stretch occupies residues 111 to 222 (YNFFPRKPKW…LRTLGEGQVV (112 aa)). Asp135 and Asp169 together coordinate Ca(2+). His179 and Asp181 together coordinate Zn(2+). 2 residues coordinate Ca(2+): Asp186 and Gly187. Zn(2+) is bound at residue His194. Gly201, Gly203, and Asp205 together coordinate Ca(2+). Position 207 (His207) interacts with Zn(2+). Ca(2+) contacts are provided by Asp209, Asp210, and Glu212. A collagen-binding region spans residues 223–397 (RVKYGNADGE…WGFCPDQGYS (175 aa)). Fibronectin type-II domains follow at residues 229–277 (ADGE…FCPH), 287–335 (ADGQ…FCPE), and 345–393 (SEGA…FCPD). 6 disulfide bridges follow: Cys234–Cys260, Cys248–Cys275, Cys292–Cys318, Cys306–Cys333, Cys350–Cys376, and Cys364–Cys391. The collagenase-like 2 stretch occupies residues 398-466 (LFLVAAHEFG…GPTPTLGPVT (69 aa)). His404 serves as a coordination point for Zn(2+). Residue Glu405 is part of the active site. Positions 408 and 414 each coordinate Zn(2+). The required for inhibitor TIMP2 binding stretch occupies residues 415 to 661 (SQDPGALMAP…GSIKSDWLGC (247 aa)). Hemopexin repeat units follow at residues 469–517 (LCKQ…WPEL), 518–564 (PEKI…GLPP), 566–614 (VQKV…WNAI), and 615–661 (PDNL…WLGC). A disulfide bridge links Cys470 with Cys661. 3 residues coordinate Ca(2+): Asp477, Asp522, and Asp570. N-linked (GlcNAc...) asparagine glycosylation occurs at Asn574. Asp619 is a Ca(2+) binding site. Asn643 carries an N-linked (GlcNAc...) asparagine glycan.

Belongs to the peptidase M10A family. Interacts (via the C-terminal hemopexin-like domains-containing region) with the integrin alpha-V/beta-3; the interaction promotes vascular invasion in angiogenic vessels and melamoma cells. Interacts (via the C-terminal PEX domain) with TIMP2 (via the C-terminal); the interaction inhibits the degradation activity. Interacts with GSK3B. Ca(2+) is required as a cofactor. It depends on Zn(2+) as a cofactor. In terms of processing, phosphorylation on multiple sites modulates enzymatic activity. Phosphorylated by PKC in vitro. The propeptide is processed by MMP14 (MT-MMP1) and MMP16 (MT-MMP3). Autocatalytic cleavage in the C-terminal produces the anti-angiogenic peptide, PEX. This processing appears to be facilitated by binding integrinv/beta3.

It is found in the secreted. The protein localises to the extracellular space. Its subcellular location is the extracellular matrix. It localises to the membrane. The protein resides in the nucleus. The enzyme catalyses Cleavage of gelatin type I and collagen types IV, V, VII, X. Cleaves the collagen-like sequence Pro-Gln-Gly-|-Ile-Ala-Gly-Gln.. Functionally, ubiquitinous metalloproteinase that is involved in diverse functions such as remodeling of the vasculature, angiogenesis, tissue repair, tumor invasion, inflammation, and atherosclerotic plaque rupture. As well as degrading extracellular matrix proteins, can also act on several nonmatrix proteins such as big endothelial 1 and beta-type CGRP promoting vasoconstriction. Also cleaves KISS at a Gly-|-Leu bond. Appears to have a role in myocardial cell death pathways. Contributes to myocardial oxidative stress by regulating the activity of GSK3beta. Cleaves GSK3beta in vitro. Involved in the formation of the fibrovascular tissues. Its function is as follows. PEX, the C-terminal non-catalytic fragment of MMP2, possesses anti-angiogenic and anti-tumor properties and inhibits cell migration and cell adhesion to FGF2 and vitronectin. Ligand for integrin alpha-v/beta-3 on the surface of blood vessels. This is 72 kDa type IV collagenase (MMP2) from Bos taurus (Bovine).